Consider the following 546-residue polypeptide: Probable protein kinase UbiB (546 aa).

The region spanning 123-501 is the Protein kinase domain; sequence DFDETPLASA…SRRQGQARYL (379 aa). ATP is bound by residues 129 to 137 and Lys-152; that span reads LASASIAQV. Asp-287 functions as the Proton acceptor in the catalytic mechanism. Helical transmembrane passes span 496 to 516 and 521 to 541; these read GQAR…VFLL and HIEW…LGWF.

The protein belongs to the ABC1 family. UbiB subfamily.

It is found in the cell inner membrane. It participates in cofactor biosynthesis; ubiquinone biosynthesis [regulation]. Functionally, is probably a protein kinase regulator of UbiI activity which is involved in aerobic coenzyme Q (ubiquinone) biosynthesis. In Aeromonas salmonicida (strain A449), this protein is Probable protein kinase UbiB.